The primary structure comprises 480 residues: UDP-N-acetylmuramoylalanine--D-glutamate ligase (480 aa).

ATP is bound at residue 127 to 133 (GTNGKTT).

The protein belongs to the MurCDEF family.

Its subcellular location is the cytoplasm. The catalysed reaction is UDP-N-acetyl-alpha-D-muramoyl-L-alanine + D-glutamate + ATP = UDP-N-acetyl-alpha-D-muramoyl-L-alanyl-D-glutamate + ADP + phosphate + H(+). It functions in the pathway cell wall biogenesis; peptidoglycan biosynthesis. In terms of biological role, cell wall formation. Catalyzes the addition of glutamate to the nucleotide precursor UDP-N-acetylmuramoyl-L-alanine (UMA). This Tropheryma whipplei (strain TW08/27) (Whipple's bacillus) protein is UDP-N-acetylmuramoylalanine--D-glutamate ligase.